Here is a 606-residue protein sequence, read N- to C-terminus: Thrombospondin-related anonymous protein (606 aa).

The signal sequence occupies residues 1 to 24; it reads MKLLGNSKYFFVVLLLCISVFLNG. The VWFA domain occupies 43 to 228; that stretch reads DLHILLDGSG…TMIKPFLSKV (186 aa). Residues 235–281 form the TSP type-1 domain; sequence VALCGKWEEWSECSTTCDNGTKIRKRKVLHPNCAGEMTAPCKVRDCP. The tract at residues 301–541 is disordered; it reads PVEPIEPAEP…SKKQSKSNNG (241 aa). 3 stretches are compositionally biased toward low complexity: residues 409–425, 440–450, and 459–479; these read ENPFIIPDEPIEPIIAP, ELPNNLPESPS, and PNDNGDNSNNTINSNKNIPNK. 2 stretches are compositionally biased toward basic and acidic residues: residues 487-504 and 516-532; these read NPYKGQEERIPKPHRSND and DKLEPEIPSKDYEENKS. Residues 544–564 form a helical membrane-spanning segment; sequence IAGGIIGGLAIIGCIGVGYNF.

As to quaternary structure, interacts (via integrin-like A-domain) with Anopheles gambiae saglin/SG1F; the interaction probably promotes sporozoite invasion of salivary gland. Interacts (via integrin-like A-domain) with human AHSG; the interaction promotes sporozoite invasion of hepatocytes and formation of exoerythrocytic forms of parasites in human hepatoma HepG2 cells.

The protein resides in the cell membrane. It localises to the cytoplasm. In terms of biological role, promotes parasite ability to invade host hepatocytes. Promotes parasite ability to invade mosquito salivary glands. Required for sporozoite gliding motility. The sequence is that of Thrombospondin-related anonymous protein from Plasmodium berghei (strain Anka).